The following is a 122-amino-acid chain: Large ribosomal subunit protein uL14 (122 aa).

Belongs to the universal ribosomal protein uL14 family. Part of the 50S ribosomal subunit. Forms a cluster with proteins L3 and L19. In the 70S ribosome, L14 and L19 interact and together make contacts with the 16S rRNA in bridges B5 and B8.

In terms of biological role, binds to 23S rRNA. Forms part of two intersubunit bridges in the 70S ribosome. The sequence is that of Large ribosomal subunit protein uL14 from Geobacillus thermodenitrificans (strain NG80-2).